Here is a 392-residue protein sequence, read N- to C-terminus: RNA-binding protein 42 (392 aa).

Residues 293-371 (FRIFCGDLGN…RPIKLRKSQW (79 aa)) enclose the RRM domain. The interval 372–392 (KDRNMDVVRKKQREKKKLGLR) is disordered. Over residues 381-392 (KKQREKKKLGLR) the composition is skewed to basic residues.

Belongs to the RRM RBM42 family.

The protein resides in the nucleus. The protein localises to the cytoplasm. Its function is as follows. May bind RNA. The protein is RNA-binding protein 42 (rbm42) of Xenopus tropicalis (Western clawed frog).